The following is a 96-amino-acid chain: UPF0235 protein VC0395_A0010/VC395_0502 (96 aa).

This sequence belongs to the UPF0235 family.

In Vibrio cholerae serotype O1 (strain ATCC 39541 / Classical Ogawa 395 / O395), this protein is UPF0235 protein VC0395_A0010/VC395_0502.